Reading from the N-terminus, the 493-residue chain is Ribulose bisphosphate carboxylase large chain (493 aa).

Residues Asn132 and Thr182 each contribute to the substrate site. The active-site Proton acceptor is Lys184. Lys186 contributes to the substrate binding site. Residues Lys210, Asp212, and Glu213 each coordinate Mg(2+). The residue at position 210 (Lys210) is an N6-carboxylysine. The active-site Proton acceptor is His302. Residues Arg303, His335, and Ser387 each contribute to the substrate site.

The protein belongs to the RuBisCO large chain family. Type I subfamily. Heterohexadecamer of 8 large chains and 8 small chains. The cofactor is Mg(2+).

It carries out the reaction 2 (2R)-3-phosphoglycerate + 2 H(+) = D-ribulose 1,5-bisphosphate + CO2 + H2O. The catalysed reaction is D-ribulose 1,5-bisphosphate + O2 = 2-phosphoglycolate + (2R)-3-phosphoglycerate + 2 H(+). In terms of biological role, ruBisCO catalyzes two reactions: the carboxylation of D-ribulose 1,5-bisphosphate, the primary event in carbon dioxide fixation, as well as the oxidative fragmentation of the pentose substrate. Both reactions occur simultaneously and in competition at the same active site. This is Ribulose bisphosphate carboxylase large chain from Acidiphilium cryptum (strain JF-5).